The primary structure comprises 383 residues: Protein delta homolog 1 (383 aa).

An N-terminal signal peptide occupies residues 1 to 23; sequence MTATEALLRVLLLLLAFGHSTYG. EGF-like domains lie at 24–55, 53–86, 88–125, 127–168, 170–206, and 208–245; these read AECF…PLCD, LCDQ…ELCD, DVRA…KDCQ, KDGP…NFCE, VANS…KTCS, and PVTN…LTCV. Over 24–303 the chain is Extracellular; sequence AECFPACNPQ…KKTPLLTEGQ (280 aa). Intrachain disulfides connect cysteine 26-cysteine 37, cysteine 30-cysteine 43, cysteine 45-cysteine 54, cysteine 57-cysteine 68, cysteine 63-cysteine 74, cysteine 76-cysteine 85, cysteine 92-cysteine 103, cysteine 97-cysteine 113, cysteine 115-cysteine 124, cysteine 131-cysteine 144, cysteine 138-cysteine 156, and cysteine 158-cysteine 167. The O-linked (GalNAc...) serine glycan is linked to serine 94. Asparagine 100 is a glycosylation site (N-linked (GlcNAc...) asparagine). O-linked (GalNAc...) threonine glycosylation occurs at threonine 143. The O-linked (GalNAc...) serine; partial glycan is linked to serine 163. N-linked (GlcNAc...) asparagine; atypical; partial glycans are attached at residues asparagine 165 and asparagine 172. Cystine bridges form between cysteine 174-cysteine 185, cysteine 179-cysteine 194, cysteine 196-cysteine 205, cysteine 212-cysteine 223, cysteine 217-cysteine 233, and cysteine 235-cysteine 244. An O-linked (GalNAc...) serine glycan is attached at serine 214. Threonine 222 carries O-linked (GalNAc...) threonine; partial glycosylation. O-linked (GalNAc...) serine; partial glycosylation occurs at serine 251. Threonine 256 is a glycosylation site (O-linked (GalNAc...) threonine). A glycan (O-linked (GalNAc...) serine; partial) is linked at serine 260. A helical membrane pass occupies residues 304–327; it reads AICFTILGVLTSLVVLGTVGIVFL. Over 328-383 the chain is Cytoplasmic; the sequence is NKCETWVSNLRYNHMLRKKKNLLLQYNSGEDLAVNIIFPEKIDMTTFSKEAGDEEI.

Monomer. Interacts with SH3RF2. Post-translationally, N- and O-glycosylated. O-glycosylated with core 1 or possibly core 8 glycans. In terms of tissue distribution, found within the stromal cells in close contact to the vascular structure of placental villi, yolk sac, fetal liver, adrenal cortex and pancreas and in the beta cells of the islets of Langerhans in the adult pancreas. Found also in some forms of neuroendocrine lung tumor tissue.

The protein resides in the membrane. The protein localises to the cytoplasm. Functionally, may have a role in neuroendocrine differentiation. The protein is Protein delta homolog 1 (DLK1) of Homo sapiens (Human).